Consider the following 329-residue polypeptide: Malate dehydrogenase (329 aa).

12-18 is a binding site for NAD(+); it reads GAAGQIG. 2 residues coordinate substrate: Arg-95 and Arg-101. Residues Asn-108, Gln-115, and 132-134 contribute to the NAD(+) site; that span reads VGN. Positions 134 and 165 each coordinate substrate. The Proton acceptor role is filled by His-190.

Belongs to the LDH/MDH superfamily. MDH type 2 family.

It carries out the reaction (S)-malate + NAD(+) = oxaloacetate + NADH + H(+). Catalyzes the reversible oxidation of malate to oxaloacetate. In Bordetella bronchiseptica (strain ATCC BAA-588 / NCTC 13252 / RB50) (Alcaligenes bronchisepticus), this protein is Malate dehydrogenase.